The following is a 111-amino-acid chain: Viscotoxin-A3 (111 aa).

The first 26 residues, 1-26 (MEVVRGSSLVLLVLLLGALLVSQVES), serve as a signal peptide directing secretion. Disulfide bonds link Cys-29–Cys-66, Cys-30–Cys-58, and Cys-42–Cys-52. A propeptide spans 73–111 (FYCTLGCESSQCATNSNGDAEAVRCKTACSDLCQDVDDA) (acidic domain).

This sequence belongs to the plant thionin (TC 1.C.44) family.

The protein resides in the secreted. Thionins are small plant proteins which are toxic to animal cells. They seem to exert their toxic effect at the level of the cell membrane. Their precise function is not known. The chain is Viscotoxin-A3 (THI2.1) from Viscum album (European mistletoe).